The following is a 153-amino-acid chain: 4'-phosphopantetheinyl transferase B, mitochondrial (153 aa).

Belongs to the P-Pant transferase superfamily.

It is found in the mitochondrion. It carries out the reaction apo-[ACP] + CoA = holo-[ACP] + adenosine 3',5'-bisphosphate + H(+). Functionally, acyl-carrier-protein synthase transfers the 4'-phosphopantetheine moiety from coenzyme A to a Ser of an acyl-carrier-protein. The 4'-phosphopantetheine (4'-PPT) portion of CoA provides the essential prosthetic group for a number of carrier proteins and multi-domain enzymes, priming them for the acceptance of acyl building blocks in fatty acid synthesis and many aspects of secondary metabolism mediated by polyketide synthases (PKSs) and non-ribosomal peptide synthetases (NRPSs). PptB is specific for the mitochondrial acyl carrier protein acpA. This chain is 4'-phosphopantetheinyl transferase B, mitochondrial, found in Aspergillus fumigatus (strain ATCC MYA-4609 / CBS 101355 / FGSC A1100 / Af293) (Neosartorya fumigata).